Consider the following 946-residue polypeptide: Alanine--tRNA ligase, cytoplasmic (946 aa).

The Zn(2+) site is built by His591, His595, Cys710, and His714.

This sequence belongs to the class-II aminoacyl-tRNA synthetase family. As to quaternary structure, monomer. Zn(2+) is required as a cofactor.

It is found in the cytoplasm. The enzyme catalyses tRNA(Ala) + L-alanine + ATP = L-alanyl-tRNA(Ala) + AMP + diphosphate. Catalyzes the attachment of alanine to tRNA(Ala) in a two-step reaction: alanine is first activated by ATP to form Ala-AMP and then transferred to the acceptor end of tRNA(Ala). Also edits incorrectly charged tRNA(Ala) via its editing domain. This chain is Alanine--tRNA ligase, cytoplasmic (alaS), found in Dictyostelium discoideum (Social amoeba).